We begin with the raw amino-acid sequence, 193 residues long: 3-isopropylmalate dehydratase small subunit (193 aa).

It belongs to the LeuD family. LeuD type 1 subfamily. As to quaternary structure, heterodimer of LeuC and LeuD.

The catalysed reaction is (2R,3S)-3-isopropylmalate = (2S)-2-isopropylmalate. It functions in the pathway amino-acid biosynthesis; L-leucine biosynthesis; L-leucine from 3-methyl-2-oxobutanoate: step 2/4. Functionally, catalyzes the isomerization between 2-isopropylmalate and 3-isopropylmalate, via the formation of 2-isopropylmaleate. This Listeria innocua serovar 6a (strain ATCC BAA-680 / CLIP 11262) protein is 3-isopropylmalate dehydratase small subunit.